The primary structure comprises 224 residues: Zinc finger C4H2 domain-containing protein (224 aa).

The stretch at 11-104 (LESIKEIRNK…RRLHDEYKPL (94 aa)) forms a coiled coil. A C4H2-type zinc finger spans residues 189–206 (CLSCHQQIHRNAPICPLC).

In terms of tissue distribution, expressed in fetal tissues, including in brain, intestine, lung, kidney and muscle. Isoform 1 is expressed in numerous fetal brain regions. Isoform 3 is highly expressed in numerous fetal brain regions and spinal cord.

It localises to the cytoplasm. The protein localises to the nucleus. Its subcellular location is the postsynaptic cell membrane. Its function is as follows. Plays a role in interneurons differentiation. Involved in neuronal development and in neuromuscular junction formation. In Homo sapiens (Human), this protein is Zinc finger C4H2 domain-containing protein (ZC4H2).